Reading from the N-terminus, the 167-residue chain is 3-isopropylmalate dehydratase small subunit (167 aa).

The protein belongs to the LeuD family. LeuD type 2 subfamily. In terms of assembly, heterodimer of LeuC and LeuD.

The catalysed reaction is (2R,3S)-3-isopropylmalate = (2S)-2-isopropylmalate. The protein operates within amino-acid biosynthesis; L-leucine biosynthesis; L-leucine from 3-methyl-2-oxobutanoate: step 2/4. Catalyzes the isomerization between 2-isopropylmalate and 3-isopropylmalate, via the formation of 2-isopropylmaleate. This chain is 3-isopropylmalate dehydratase small subunit, found in Oleidesulfovibrio alaskensis (strain ATCC BAA-1058 / DSM 17464 / G20) (Desulfovibrio alaskensis).